A 420-amino-acid chain; its full sequence is Na(+)/H(+) antiporter NhaA (420 aa).

Transmembrane regions (helical) follow at residues 34 to 54, 69 to 89, 107 to 127, 141 to 161, 168 to 190, 194 to 213, 271 to 291, 301 to 321, 342 to 362, and 374 to 394; these read TTGG…ANLG, LTIE…IAGL, LVPI…YTLF, IPMA…GAGL, FLLT…FFST, IWWL…MQHF, WSAG…HVSG, PISL…ITLG, IIAV…MTDL, and AKAS…AMLH.

It belongs to the NhaA Na(+)/H(+) (TC 2.A.33) antiporter family.

It localises to the cell membrane. The catalysed reaction is Na(+)(in) + 2 H(+)(out) = Na(+)(out) + 2 H(+)(in). Functionally, na(+)/H(+) antiporter that extrudes sodium in exchange for external protons. This Cutibacterium acnes (strain DSM 16379 / KPA171202) (Propionibacterium acnes) protein is Na(+)/H(+) antiporter NhaA.